We begin with the raw amino-acid sequence, 310 residues long: Tagatose-6-phosphate kinase (310 aa).

Belongs to the carbohydrate kinase PfkB family. LacC subfamily.

It catalyses the reaction D-tagatofuranose 6-phosphate + ATP = D-tagatofuranose 1,6-bisphosphate + ADP + H(+). It participates in carbohydrate metabolism; D-tagatose 6-phosphate degradation; D-glyceraldehyde 3-phosphate and glycerone phosphate from D-tagatose 6-phosphate: step 1/2. The polypeptide is Tagatose-6-phosphate kinase (Staphylococcus aureus (strain Mu3 / ATCC 700698)).